A 447-amino-acid chain; its full sequence is Glutamate--tRNA ligase 1 (447 aa).

Positions Pro-10–Asn-20 match the 'HIGH' region motif. The 'KMSKS' region signature appears at Lys-240–Arg-244. Lys-243 lines the ATP pocket.

This sequence belongs to the class-I aminoacyl-tRNA synthetase family. Glutamate--tRNA ligase type 1 subfamily. Monomer.

It is found in the cytoplasm. It catalyses the reaction tRNA(Glu) + L-glutamate + ATP = L-glutamyl-tRNA(Glu) + AMP + diphosphate. Its function is as follows. Catalyzes the attachment of glutamate to tRNA(Glu) in a two-step reaction: glutamate is first activated by ATP to form Glu-AMP and then transferred to the acceptor end of tRNA(Glu). This Rickettsia akari (strain Hartford) protein is Glutamate--tRNA ligase 1.